An 835-amino-acid chain; its full sequence is Peptide transporter family 1 (835 aa).

11 helical membrane passes run 86–106 (IFFNGFTVLCYTTPLLGSIVA), 113–133 (FWTIFSVSILYAIGQVVLALA), 150–170 (GLLIIAFGTGGIKPCVSAFGG), 183–203 (LFFSMFYFSINAGSMISTFIS), 222–242 (FGIPAILMIVATLVFMGGSFW), 325–345 (MFLPVPMFWALYDQQGSVWLI), 368–388 (LNAVLILLFIPLFQVIIYPVA), 401–421 (VTGGLLASLAFLITGFVQLQV), 697–717 (ILWQIPQIVVITAAEILFSIT), 738–758 (WLLTTAAGDSIIVVITILNLF), and 765–785 (FFVYAAAMFVVIAIFALLSIF). Residues 814–835 (PRYSIDNKGFHPDEKDTFDMHF) form a disordered region. A compositionally biased stretch (basic and acidic residues) spans 821–835 (KGFHPDEKDTFDMHF).

Belongs to the major facilitator superfamily. Proton-dependent oligopeptide transporter (POT/PTR) (TC 2.A.17) family. As to expression, expressed specifically in the intestine.

Its subcellular location is the apical cell membrane. Functionally, low-affinity peptide transporter that is necessary for proton-dependent uptake of di- or tripeptides, and to a minor extent tetrapeptides, in the intestine. Transport is independent of sodium and chloride ions. Controls the uptake of dietary fatty acids, plays a role in fatty acid synthesis and is responsible for dipeptide-induced acidification of the intestine. Regulates cellular pH differences together with the antiporter protein, nhx-2. Amino acid uptake and absorption levels influence the insulin signaling/daf-2 and let-363/TOR pathways, subsequently affecting the stress response and longevity of the organism. It is required for the uptake of the L-enantiomers of various amino acids, including L-glutamate. In response to the availability of amino acid nutrients, may play a role in promoting reproduction and fertility. The chain is Peptide transporter family 1 from Caenorhabditis elegans.